Here is a 178-residue protein sequence, read N- to C-terminus: Large ribosomal subunit protein uL10 (178 aa).

It belongs to the universal ribosomal protein uL10 family. Part of the ribosomal stalk of the 50S ribosomal subunit. The N-terminus interacts with L11 and the large rRNA to form the base of the stalk. The C-terminus forms an elongated spine to which L12 dimers bind in a sequential fashion forming a multimeric L10(L12)X complex.

In terms of biological role, forms part of the ribosomal stalk, playing a central role in the interaction of the ribosome with GTP-bound translation factors. The protein is Large ribosomal subunit protein uL10 of Petrotoga mobilis (strain DSM 10674 / SJ95).